Here is a 442-residue protein sequence, read N- to C-terminus: Probable carboxypeptidase PAAG_00768 (442 aa).

An N-terminal signal peptide occupies residues Met-1–Ala-20. Asn-102 carries N-linked (GlcNAc...) asparagine glycosylation. Asp-160 lines the Zn(2+) pocket. Catalysis depends on Glu-192, which acts as the Proton acceptor. Glu-193 serves as a coordination point for Zn(2+). A glycan (N-linked (GlcNAc...) asparagine) is linked at Asn-343.

Belongs to the peptidase M20A family. The cofactor is Zn(2+).

It is found in the secreted. In Paracoccidioides lutzii (strain ATCC MYA-826 / Pb01) (Paracoccidioides brasiliensis), this protein is Probable carboxypeptidase PAAG_00768.